The chain runs to 488 residues: Glutamyl-tRNA(Gln) amidotransferase subunit A (488 aa).

Active-site charge relay system residues include Lys77 and Ser152. The Acyl-ester intermediate role is filled by Ser176.

This sequence belongs to the amidase family. GatA subfamily. As to quaternary structure, heterotrimer of A, B and C subunits.

The catalysed reaction is L-glutamyl-tRNA(Gln) + L-glutamine + ATP + H2O = L-glutaminyl-tRNA(Gln) + L-glutamate + ADP + phosphate + H(+). Functionally, allows the formation of correctly charged Gln-tRNA(Gln) through the transamidation of misacylated Glu-tRNA(Gln) in organisms which lack glutaminyl-tRNA synthetase. The reaction takes place in the presence of glutamine and ATP through an activated gamma-phospho-Glu-tRNA(Gln). The chain is Glutamyl-tRNA(Gln) amidotransferase subunit A from Streptococcus gordonii (strain Challis / ATCC 35105 / BCRC 15272 / CH1 / DL1 / V288).